We begin with the raw amino-acid sequence, 435 residues long: Methylenetetrahydrofolate--tRNA-(uracil-5-)-methyltransferase TrmFO (435 aa).

7–12 is a binding site for FAD; that stretch reads GAGLAG.

This sequence belongs to the MnmG family. TrmFO subfamily. FAD is required as a cofactor.

The protein resides in the cytoplasm. It carries out the reaction uridine(54) in tRNA + (6R)-5,10-methylene-5,6,7,8-tetrahydrofolate + NADH + H(+) = 5-methyluridine(54) in tRNA + (6S)-5,6,7,8-tetrahydrofolate + NAD(+). It catalyses the reaction uridine(54) in tRNA + (6R)-5,10-methylene-5,6,7,8-tetrahydrofolate + NADPH + H(+) = 5-methyluridine(54) in tRNA + (6S)-5,6,7,8-tetrahydrofolate + NADP(+). Catalyzes the folate-dependent formation of 5-methyl-uridine at position 54 (M-5-U54) in all tRNAs. The sequence is that of Methylenetetrahydrofolate--tRNA-(uracil-5-)-methyltransferase TrmFO from Thermotoga maritima (strain ATCC 43589 / DSM 3109 / JCM 10099 / NBRC 100826 / MSB8).